Reading from the N-terminus, the 357-residue chain is Quinolinate synthase (357 aa).

Residues His-50 and Ser-71 each contribute to the iminosuccinate site. Cys-116 lines the [4Fe-4S] cluster pocket. Residues 142–144 (YAN) and Ser-159 each bind iminosuccinate. Cys-203 serves as a coordination point for [4Fe-4S] cluster. Iminosuccinate-binding positions include 229–231 (HPE) and Thr-246. [4Fe-4S] cluster is bound at residue Cys-300.

The protein belongs to the quinolinate synthase family. Type 1 subfamily. The cofactor is [4Fe-4S] cluster.

Its subcellular location is the cytoplasm. The catalysed reaction is iminosuccinate + dihydroxyacetone phosphate = quinolinate + phosphate + 2 H2O + H(+). It functions in the pathway cofactor biosynthesis; NAD(+) biosynthesis; quinolinate from iminoaspartate: step 1/1. In terms of biological role, catalyzes the condensation of iminoaspartate with dihydroxyacetone phosphate to form quinolinate. The sequence is that of Quinolinate synthase from Shewanella oneidensis (strain ATCC 700550 / JCM 31522 / CIP 106686 / LMG 19005 / NCIMB 14063 / MR-1).